The primary structure comprises 248 residues: DNA repair protein RecO (248 aa).

Belongs to the RecO family.

Functionally, involved in DNA repair and RecF pathway recombination. The protein is DNA repair protein RecO of Oleidesulfovibrio alaskensis (strain ATCC BAA-1058 / DSM 17464 / G20) (Desulfovibrio alaskensis).